Here is a 573-residue protein sequence, read N- to C-terminus: Glutathione/L-cysteine transport system ATP-binding/permease protein CydC (573 aa).

Residues 1–15 (MRALLPYLALYKRHK) are Cytoplasmic-facing. 2 helical membrane-spanning segments follow: residues 16–36 (WMLSLGIVLAIVTLLASIGLL) and 37–57 (TLSGWFLSASAVAGVAGLYSF). An ABC transmembrane type-1 domain is found at 20 to 306 (LGIVLAIVTL…VTGAFQHLGQ (287 aa)). Residues 58–136 (NYMLPAAGVR…VDTLDHLYLR (79 aa)) are Cytoplasmic-facing. A helical membrane pass occupies residues 137-157 (VISPLVGAFVVIMVVTIGLSF). Residues 158–161 (LDFT) lie on the Periplasmic side of the membrane. The chain crosses the membrane as a helical span at residues 162–182 (LAFTLGGIMLLTLFLMPPLFY). Residues 183-249 (RAGKSTGQNL…QSELTALSQA (67 aa)) are Cytoplasmic-facing. The helical transmembrane segment at 250-270 (IMLLIGALAVILMLWMASGGV) threads the bilayer. At 271 to 276 (GGNAQP) the chain is on the periplasmic side. The helical transmembrane segment at 277–297 (GALIALFVFCALAAFEALAPV) threads the bilayer. At 298 to 573 (TGAFQHLGQV…GRYYQFKQGL (276 aa)) the chain is on the cytoplasmic side. The ABC transporter domain occupies 339–572 (LTLRDVQFTY…QGRYYQFKQG (234 aa)). 373–380 (GRTGCGKS) contributes to the ATP binding site.

It belongs to the ABC transporter superfamily. Cysteine exporter (TC 3.A.1.129.1) family. In terms of assembly, forms a heterodimer with CydD.

It localises to the cell inner membrane. The catalysed reaction is L-cysteine(in) + ATP + H2O = L-cysteine(out) + ADP + phosphate + H(+). It catalyses the reaction glutathione(in) + ATP + H2O = glutathione(out) + ADP + phosphate + H(+). ATPase activity is stimulated by various thiol compounds. The presence of heme leads to a further enhancement of thiol-stimulated ATPase activity, although a large excess of heme inhibits activity. Glutathione transport is inhibited by sodium orthovanadate, an inhibitor of ABC-type transport systems, but not by the proton ionophore carbonyl cyanide m-chlorophenylhydrazone (CCCP). Its function is as follows. Part of the ABC transporter complex CydDC that exports the reduced low-molecular-weight thiols cysteine and glutathione to the periplasm. Export of these thiol-containing redox-active molecules may be crucial for redox homeostasis in the periplasm, permitting correct assembly of various respiratory complexes and formation of correct disulfide bonds in periplasmic and secreted proteins. CydC contains transmembrane domains (TMD), which form a pore in the inner membrane, and an ATP-binding domain (NBD), which is responsible for energy generation. Required for the assembly of functional cytochrome bd-type quinol oxidases and periplasmic c-type cytochromes. Overexpression of CydDC under anaerobic conditions also results in the formation of a heme biosynthesis-derived pigment, P-574. CydDC binds heme b, but heme is probably not transported by the complex and instead has a role in regulating ATPase activity. Conversely, a more recent study suggests an alternative function of CydDC: authors suggest that CydDC does not mediate the export of L-cysteine but rather reduces cytoplasmic L-cystine to L-cysteine. The principle function of CydDC would be to maintain the reduced state of cytoplasmic L-cysteine, thereby providing an important connection between sulfur metabolism, oxidative stress and resistance to antibiotics. This Escherichia coli (strain K12) protein is Glutathione/L-cysteine transport system ATP-binding/permease protein CydC.